A 329-amino-acid chain; its full sequence is NADH-quinone oxidoreductase subunit H 2 (329 aa).

The next 8 helical transmembrane spans lie at Gly-12–Ala-32, Trp-78–Ile-98, Val-120–Gly-140, Leu-159–Ser-179, Gly-191–Ala-211, Leu-242–Phe-262, Leu-270–Trp-290, and Lys-309–Val-329.

The protein belongs to the complex I subunit 1 family. As to quaternary structure, NDH-1 is composed of 14 different subunits. Subunits NuoA, H, J, K, L, M, N constitute the membrane sector of the complex.

It is found in the cell inner membrane. It carries out the reaction a quinone + NADH + 5 H(+)(in) = a quinol + NAD(+) + 4 H(+)(out). NDH-1 shuttles electrons from NADH, via FMN and iron-sulfur (Fe-S) centers, to quinones in the respiratory chain. The immediate electron acceptor for the enzyme in this species is believed to be ubiquinone. Couples the redox reaction to proton translocation (for every two electrons transferred, four hydrogen ions are translocated across the cytoplasmic membrane), and thus conserves the redox energy in a proton gradient. This subunit may bind ubiquinone. The chain is NADH-quinone oxidoreductase subunit H 2 from Geobacter sulfurreducens (strain ATCC 51573 / DSM 12127 / PCA).